The chain runs to 401 residues: MSFVKKKFHPISRYYNYLFPIAAFLLPLICLPFLSASQKNYSYFIFSIISAVGWFFSIGLREKQLKMAAGQLLQTKIRKIVEKDEGLRKICESVEERQYESQQLRSQNQKLLNQLLHVRSVFMKTKADTQRMEGAIAHLREENQCLQLQLDALSQECREKEEEAQQLNRELADALAYQQVLNEEYQATFTEQHNMLDVRQVYIGKLESKVQDLMCEIRNLLQLESNMVDSFPRQATVNSQEQPKQLLSELKKIAFKVENAEAASSLTASRYIRSESSVHNYSLECRQLFDNLREESLGMLFVYAPQSQRAVFANSLFKTWTGYGVEDFLNAGGDIVISGLPQWETDLRLLDRKERSGKIIIKTKNHGQIPFYYCLTILNKGPLHNHVLGVLYPVRIDAFRG.

It belongs to the UPF0242 family.

This chain is UPF0242 protein CCA_01002, found in Chlamydia caviae (strain ATCC VR-813 / DSM 19441 / 03DC25 / GPIC) (Chlamydophila caviae).